The following is a 347-amino-acid chain: S-adenosylmethionine:tRNA ribosyltransferase-isomerase (347 aa).

The protein belongs to the QueA family. In terms of assembly, monomer.

The protein resides in the cytoplasm. The enzyme catalyses 7-aminomethyl-7-carbaguanosine(34) in tRNA + S-adenosyl-L-methionine = epoxyqueuosine(34) in tRNA + adenine + L-methionine + 2 H(+). Its pathway is tRNA modification; tRNA-queuosine biosynthesis. In terms of biological role, transfers and isomerizes the ribose moiety from AdoMet to the 7-aminomethyl group of 7-deazaguanine (preQ1-tRNA) to give epoxyqueuosine (oQ-tRNA). The chain is S-adenosylmethionine:tRNA ribosyltransferase-isomerase from Pseudomonas paraeruginosa (strain DSM 24068 / PA7) (Pseudomonas aeruginosa (strain PA7)).